A 158-amino-acid chain; its full sequence is Small ribosomal subunit protein uS7 (158 aa).

It belongs to the universal ribosomal protein uS7 family. Part of the 30S ribosomal subunit. Contacts proteins S9 and S11.

Functionally, one of the primary rRNA binding proteins, it binds directly to 16S rRNA where it nucleates assembly of the head domain of the 30S subunit. Is located at the subunit interface close to the decoding center, probably blocks exit of the E-site tRNA. This is Small ribosomal subunit protein uS7 from Azobacteroides pseudotrichonymphae genomovar. CFP2.